The sequence spans 152 residues: Large-conductance mechanosensitive channel (152 aa).

2 helical membrane-spanning segments follow: residues 14-34 (VIDL…VKSL) and 84-104 (VGQF…VFLL).

This sequence belongs to the MscL family. Homopentamer.

It is found in the cell inner membrane. Its function is as follows. Channel that opens in response to stretch forces in the membrane lipid bilayer. May participate in the regulation of osmotic pressure changes within the cell. This chain is Large-conductance mechanosensitive channel, found in Laribacter hongkongensis (strain HLHK9).